The sequence spans 424 residues: Zygote arrest protein 1 (424 aa).

2 disordered regions span residues 125-175 (RTLQ…PMRF) and 196-313 (GPGP…SPEL). Residues 141–150 (GAEGTTGGGS) are compositionally biased toward gly residues. Positions 289 to 298 (RARDGGDGRE) are enriched in basic and acidic residues. The 3CxxC-type zinc-finger motif lies at 326 to 409 (KYGYYHCKDC…RQDLCGRCKG (84 aa)).

This sequence belongs to the ZAR1 family. As to quaternary structure, interacts with YBX2. Ubiquitinated and degradaded by the proteasome during oocyte meiotic maturation, leading to MARDO (mitochondria-associated ribonucleoprotein domain) membraneless compartment dissolution. As to expression, ovary and testis.

It is found in the cytoplasm. It localises to the cytoplasmic ribonucleoprotein granule. Its function is as follows. mRNA-binding protein that mediates formation of MARDO (mitochondria-associated ribonucleoprotein domain), a membraneless compartment that stores maternal mRNAs in oocytes. MARDO assembly around mitochondria is directed by an increase in mitochondrial membrane potential during oocyte growth. Promotes formation of MARDO phase-separated membraneless compartment by undergoing liquid-liquid phase separation upon binding to maternal mRNAs. Binds to the 3'-UTR of maternal mRNAs. Maternal mRNAs stored in the MARDO are translationally repressed. Essential for female fertility and oocyte-to-embryo transition by coordinating maternal mRNA storage, translation and degradation. This Homo sapiens (Human) protein is Zygote arrest protein 1.